The chain runs to 317 residues: Lysosomal-associated transmembrane protein 4B (317 aa).

Positions 25–73 (AFGAKGTDPAEARSSRGIEEAGPRAHGRAGREPERRRSRQQRRGGLQAR) are disordered. Positions 32–59 (DPAEARSSRGIEEAGPRAHGRAGREPER) are enriched in basic and acidic residues. 4 helical membrane passes run 117–137 (ILLGVWYLIINAVVLLILLSA), 163–183 (MCIAIAISLLMILICAMATYG), 191–211 (WIIPFFCYQIFDFALNMLVAI), and 244–264 (CLVLIILLFISIILTFKGYLI). The required for NEDD4 interaction stretch occupies residues 205–221 (LNMLVAITVLIYPNSIQ).

The protein belongs to the LAPTM4/LAPTM5 transporter family. In terms of assembly, homooligomer; upon reaching the lysosomes. Interacts with MCOLN1. Interacts with NEDD4; may play a role in the lysosomal sorting of LAPTM4B; enhances HGS association with NEDD4; mediates inhibition of EGFR degradation. Interacts with PIP5K1C; promotes SNX5 association with LAPTM4B; kinase activity of PIP5K1C is required; interaction is regulated by phosphatidylinositol 4,5-bisphosphate generated by PIP5K1C. Interacts with HGS; promotes HGS ubiquitination. Interacts with SNX5. Interacts with SLC3A2 and SLC7A5; recruits SLC3A2 and SLC7A5 to lysosomes to promote leucine uptake into these organelles and is required for mTORC1 activation. Interacts with LRRC32; decreases TGFB1 production in regulatory T cells. Interacts with BECN1; competes with EGFR for LAPTM4B binding; regulates EGFR activity. Interacts with EGFR; positively correlates with EGFR activation. In terms of processing, undergoes proteolytic cleavage following delivery to the lysosomes. Post-translationally, ubiquitinated by NEDD4.

The protein localises to the endomembrane system. It localises to the late endosome membrane. It is found in the cell membrane. The protein resides in the cell projection. Its subcellular location is the lysosome membrane. The protein localises to the endosome membrane. It localises to the endosome. It is found in the multivesicular body membrane. The protein resides in the multivesicular body lumen. Required for optimal lysosomal function. Blocks EGF-stimulated EGFR intraluminal sorting and degradation. Conversely by binding with the phosphatidylinositol 4,5-bisphosphate, regulates its PIP5K1C interaction, inhibits HGS ubiquitination and relieves LAPTM4B inhibition of EGFR degradation. Recruits SLC3A2 and SLC7A5 (the Leu transporter) to the lysosome, promoting entry of leucine and other essential amino acid (EAA) into the lysosome, stimulating activation of proton-transporting vacuolar (V)-ATPase protein pump (V-ATPase) and hence mTORC1 activation. Plays a role as negative regulator of TGFB1 production in regulatory T cells. Binds ceramide and facilitates its exit from late endosome in order to control cell death pathways. In Homo sapiens (Human), this protein is Lysosomal-associated transmembrane protein 4B.